We begin with the raw amino-acid sequence, 83 residues long: MKLCMTLLITAIAVVTFVVATQEESAEFNEVEESREDNCIAEDYGKCTWGGTKCCRGRPCRCSMIGTNCECTPRLIMEGLSFA.

An N-terminal signal peptide occupies residues 1 to 20 (MKLCMTLLITAIAVVTFVVA). Positions 21 to 35 (TQEESAEFNEVEESR) are excised as a propeptide. Cystine bridges form between Cys39/Cys55, Cys47/Cys60, Cys54/Cys71, and Cys62/Cys69. Ser81 carries the D-serine (Ser) modification.

This sequence belongs to the neurotoxin 02 (plectoxin) family. 03 (omega-agtx) subfamily. Post-translationally, the toxin with D-Ser (named omega-aga IVC) is 80-90 fold more potent than that with L-Ser (omega-aga IVB) against Cav2.1/CACNA1A (P-type) channels in rat cerebellar Purkinje neurons and is more resistant to proteases. The epimerization is done by the venom peptide isomerase heterodimer. As to expression, expressed by the venom gland.

The protein localises to the secreted. In terms of biological role, antagonist of voltage-gated Cav2.1/CACNA1A (P-type) calcium channels. Paralyzes insect by blocking neuromuscular transmission. The sequence is that of Omega-agatoxin-Aa4b from Agelenopsis aperta (North American funnel-web spider).